Reading from the N-terminus, the 101-residue chain is Protein SSXA1 (101 aa).

The region spanning 19-83 is the KRAB-related domain; sequence ETCQAFEDIS…ERVTKSVLSD (65 aa). Residues 73–101 are disordered; the sequence is KERVTKSVLSDSDEVSSHESQDKRKNPVV. A compositionally biased stretch (basic and acidic residues) spans 87 to 101; the sequence is VSSHESQDKRKNPVV.

The protein belongs to the SSX family. As to expression, specifically expressed in testis (at protein level). Not detected in other tissues tested (at protein level).

Its subcellular location is the nucleus. Its function is as follows. Could act as a modulator of transcription. The sequence is that of Protein SSXA1 from Mus musculus (Mouse).